The following is a 522-amino-acid chain: Response regulator mcs4 (522 aa).

Residues 148 to 274 (DSLESPVSAP…RSISHSSLYT (127 aa)) form a disordered region. Over residues 174 to 194 (NLRNASRTRSHQTLPSSNVNK) the composition is skewed to polar residues. The segment covering 244-255 (RSDESTAEKLAK) has biased composition (basic and acidic residues). The span at 260-274 (TPTNSRSISHSSLYT) shows a compositional bias: polar residues. The region spanning 363-505 (NVLIVEDNII…WLEKKITEWG (143 aa)) is the Response regulatory domain. A 4-aspartylphosphate modification is found at aspartate 412.

It is found in the cytoplasm. Functionally, response regulator that coordinately controls the stress activated wak1-wis1-sty1 MAP kinase pathway and fission yeast cell cycle. In Schizosaccharomyces pombe (strain 972 / ATCC 24843) (Fission yeast), this protein is Response regulator mcs4 (mcs4).